The sequence spans 451 residues: tRNA-2-methylthio-N(6)-dimethylallyladenosine synthase (451 aa).

The MTTase N-terminal domain occupies 6–122; sequence RHYHITTFGC…LQDLLEQVFN (117 aa). [4Fe-4S] cluster-binding residues include cysteine 15, cysteine 51, cysteine 85, cysteine 157, cysteine 161, and cysteine 164. The Radical SAM core domain occupies 143–380; it reads RDSKITAWVN…NHLVGVKAAD (238 aa). Positions 383 to 447 constitute a TRAM domain; the sequence is QRYMGRIEEV…PFSLTGEVKE (65 aa).

It belongs to the methylthiotransferase family. MiaB subfamily. As to quaternary structure, monomer. Requires [4Fe-4S] cluster as cofactor.

The protein resides in the cytoplasm. It carries out the reaction N(6)-dimethylallyladenosine(37) in tRNA + (sulfur carrier)-SH + AH2 + 2 S-adenosyl-L-methionine = 2-methylsulfanyl-N(6)-dimethylallyladenosine(37) in tRNA + (sulfur carrier)-H + 5'-deoxyadenosine + L-methionine + A + S-adenosyl-L-homocysteine + 2 H(+). Catalyzes the methylthiolation of N6-(dimethylallyl)adenosine (i(6)A), leading to the formation of 2-methylthio-N6-(dimethylallyl)adenosine (ms(2)i(6)A) at position 37 in tRNAs that read codons beginning with uridine. In Trichodesmium erythraeum (strain IMS101), this protein is tRNA-2-methylthio-N(6)-dimethylallyladenosine synthase.